Reading from the N-terminus, the 128-residue chain is LIM domain-containing protein 2 (128 aa).

An N-acetylmethionine modification is found at Met-1. The interval 1 to 25 (MFQAAGAAQATPSHEAKGSSGSSTV) is disordered. The LIM zinc-binding domain occupies 39–99 (ETCAACQKTV…RPHFQQLFKS (61 aa)). Residues Cys-41, Cys-44, His-62, Cys-65, Cys-68, Cys-71, Cys-89, and His-92 each coordinate Zn(2+).

Interacts with ILK.

The protein localises to the cytoplasm. It localises to the nucleus. Acts as an activator of the protein-kinase ILK, thereby regulating cell motility. This chain is LIM domain-containing protein 2, found in Mus musculus (Mouse).